The primary structure comprises 354 residues: Probable mannitol dehydrogenase 1 (354 aa).

Zn(2+) contacts are provided by cysteine 43, histidine 65, cysteine 96, cysteine 99, cysteine 102, cysteine 110, and cysteine 158.

Belongs to the zinc-containing alcohol dehydrogenase family. Requires Zn(2+) as cofactor.

It carries out the reaction D-mannitol + NAD(+) = D-mannose + NADH + H(+). Functionally, oxidizes mannitol to mannose. Provides the initial step by which translocated mannitol is committed to central metabolism and, by regulating mannitol pool size, is important in regulating salt tolerance at the cellular level. This chain is Probable mannitol dehydrogenase 1 (CAD1), found in Stylosanthes humilis (Townsville stylo).